The primary structure comprises 831 residues: Leucine--tRNA ligase (831 aa).

The 'HIGH' region signature appears at Pro-36 to His-46. The 'KMSKS' region motif lies at Lys-607–Ser-611. ATP is bound at residue Lys-610.

Belongs to the class-I aminoacyl-tRNA synthetase family.

It is found in the cytoplasm. It carries out the reaction tRNA(Leu) + L-leucine + ATP = L-leucyl-tRNA(Leu) + AMP + diphosphate. This Neorickettsia sennetsu (strain ATCC VR-367 / Miyayama) (Ehrlichia sennetsu) protein is Leucine--tRNA ligase.